A 917-amino-acid polypeptide reads, in one-letter code: Intercellular adhesion molecule 5 (917 aa).

Positions 1–31 (MPGPSPGLRRALLGLWAALGLGILGISAVAL) are cleaved as a signal peptide. Residues 32–833 (EPFWADLQPR…RITVRVAGPW (802 aa)) lie on the Extracellular side of the membrane. 9 consecutive Ig-like C2-type domains span residues 48-130 (GGSL…PLPS), 135-235 (GENF…SLIA), 242-329 (DSER…LLTL), 337-402 (GKMV…SSEL), 408-486 (PRLD…VTLT), 491-567 (PALD…VAVT), 572-651 (PSFE…NRHG), 665-738 (PQMD…RTVT), and 745-828 (PVVA…ITVR). N-linked (GlcNAc...) (high mannose) asparagine glycosylation occurs at Asn-54. 2 disulfide bridges follow: Cys-55-Cys-99 and Cys-59-Cys-103. Asn-74 and Asn-137 each carry an N-linked (GlcNAc...) asparagine glycan. An intrachain disulfide couples Cys-142 to Cys-198. Thr-182 is modified (phosphothreonine). N-linked (GlcNAc...) asparagine glycosylation is found at Asn-195, Asn-214, Asn-274, Asn-316, Asn-371, and Asn-397. An intrachain disulfide couples Cys-249 to Cys-302. Cys-344 and Cys-383 are joined by a disulfide. Intrachain disulfides connect Cys-415–Cys-470, Cys-498–Cys-551, and Cys-579–Cys-644. Residues Asn-582 and Asn-645 are each glycosylated (N-linked (GlcNAc...) asparagine). Cys-672 and Cys-724 are oxidised to a cystine. Asn-762, Asn-793, and Asn-794 each carry an N-linked (GlcNAc...) asparagine glycan. An intrachain disulfide couples Cys-767 to Cys-812. The chain crosses the membrane as a helical span at residues 834–854 (LWVAVGGAAGGAALLAAGAGL). Residues 855–917 (AFYVQSTACK…EVFAIQLTSS (63 aa)) lie on the Cytoplasmic side of the membrane. Gly residues predominate over residues 884-893 (GAGGTPGAEG). The tract at residues 884–908 (GAGGTPGAEGGAETPGTAESPADGE) is disordered.

The protein belongs to the immunoglobulin superfamily. ICAM family. Glycosylation at Asn-54 is critical for functional folding. As to expression, expressed on neurons in the most rostral segment of the mammalian brain, the telencephalon.

Its subcellular location is the membrane. Functionally, ICAM proteins are ligands for the leukocyte adhesion protein LFA-1 (integrin alpha-L/beta-2). This chain is Intercellular adhesion molecule 5 (Icam5), found in Mus musculus (Mouse).